The primary structure comprises 271 residues: Urease accessory protein UreD (271 aa).

This sequence belongs to the UreD family. UreD, UreF and UreG form a complex that acts as a GTP-hydrolysis-dependent molecular chaperone, activating the urease apoprotein by helping to assemble the nickel containing metallocenter of UreC. The UreE protein probably delivers the nickel.

The protein resides in the cytoplasm. In terms of biological role, required for maturation of urease via the functional incorporation of the urease nickel metallocenter. The sequence is that of Urease accessory protein UreD from Haemophilus influenzae (strain 86-028NP).